The sequence spans 334 residues: Transposase for insertion sequence element IS1328 (334 aa).

The protein belongs to the transposase IS1111A/IS1328/IS1533 family.

Its function is as follows. Required for the transposition of the insertion element. The polypeptide is Transposase for insertion sequence element IS1328 (Yersinia enterocolitica).